Reading from the N-terminus, the 374-residue chain is Peptide chain release factor 2 (374 aa).

Position 254 is an N5-methylglutamine (glutamine 254).

Belongs to the prokaryotic/mitochondrial release factor family. In terms of processing, methylated by PrmC. Methylation increases the termination efficiency of RF2.

The protein resides in the cytoplasm. Peptide chain release factor 2 directs the termination of translation in response to the peptide chain termination codons UGA and UAA. In Renibacterium salmoninarum (strain ATCC 33209 / DSM 20767 / JCM 11484 / NBRC 15589 / NCIMB 2235), this protein is Peptide chain release factor 2.